Reading from the N-terminus, the 491-residue chain is Ketol-acid reductoisomerase (NADP(+)) (491 aa).

The KARI N-terminal Rossmann domain occupies 14–208 (LDQLGRCRFM…GGHRAGVLES (195 aa)). Residues 45 to 48 (CGAQ), arginine 68, arginine 76, serine 78, and 108 to 110 (DKQ) contribute to the NADP(+) site. Histidine 132 is a catalytic residue. Residue glycine 158 participates in NADP(+) binding. KARI C-terminal knotted domains are found at residues 209–344 (SFVA…NAPK) and 345–485 (YEGK…MTDM). The Mg(2+) site is built by aspartate 217, glutamate 221, glutamate 389, and glutamate 393. A substrate-binding site is contributed by serine 414.

This sequence belongs to the ketol-acid reductoisomerase family. The cofactor is Mg(2+).

The catalysed reaction is (2R)-2,3-dihydroxy-3-methylbutanoate + NADP(+) = (2S)-2-acetolactate + NADPH + H(+). It catalyses the reaction (2R,3R)-2,3-dihydroxy-3-methylpentanoate + NADP(+) = (S)-2-ethyl-2-hydroxy-3-oxobutanoate + NADPH + H(+). It participates in amino-acid biosynthesis; L-isoleucine biosynthesis; L-isoleucine from 2-oxobutanoate: step 2/4. The protein operates within amino-acid biosynthesis; L-valine biosynthesis; L-valine from pyruvate: step 2/4. Functionally, involved in the biosynthesis of branched-chain amino acids (BCAA). Catalyzes an alkyl-migration followed by a ketol-acid reduction of (S)-2-acetolactate (S2AL) to yield (R)-2,3-dihydroxy-isovalerate. In the isomerase reaction, S2AL is rearranged via a Mg-dependent methyl migration to produce 3-hydroxy-3-methyl-2-ketobutyrate (HMKB). In the reductase reaction, this 2-ketoacid undergoes a metal-dependent reduction by NADPH to yield (R)-2,3-dihydroxy-isovalerate. The chain is Ketol-acid reductoisomerase (NADP(+)) from Pasteurella multocida (strain Pm70).